Here is a 157-residue protein sequence, read N- to C-terminus: Small ribosomal subunit protein uS7 (157 aa).

The protein belongs to the universal ribosomal protein uS7 family. Part of the 30S ribosomal subunit. Contacts proteins S9 and S11.

One of the primary rRNA binding proteins, it binds directly to 16S rRNA where it nucleates assembly of the head domain of the 30S subunit. Is located at the subunit interface close to the decoding center, probably blocks exit of the E-site tRNA. This is Small ribosomal subunit protein uS7 from Polaromonas sp. (strain JS666 / ATCC BAA-500).